The sequence spans 142 residues: Glia maturation factor beta (142 aa).

Residue serine 2 is modified to N-acetylserine. One can recognise an ADF-H domain in the interval 4–139 (SLVVCDVAED…TEEWLREKLG (136 aa)).

It belongs to the actin-binding proteins ADF family. GMF subfamily. In terms of processing, phosphorylated; stimulated by phorbol ester.

Its function is as follows. This protein causes differentiation of brain cells, stimulation of neural regeneration, and inhibition of proliferation of tumor cells. This is Glia maturation factor beta (GMFB) from Homo sapiens (Human).